Consider the following 185-residue polypeptide: Peptidyl-tRNA hydrolase (185 aa).

Tyrosine 14 provides a ligand contact to tRNA. Histidine 19 functions as the Proton acceptor in the catalytic mechanism. TRNA contacts are provided by tyrosine 64, asparagine 66, and asparagine 112.

It belongs to the PTH family. As to quaternary structure, monomer.

It localises to the cytoplasm. It carries out the reaction an N-acyl-L-alpha-aminoacyl-tRNA + H2O = an N-acyl-L-amino acid + a tRNA + H(+). Hydrolyzes ribosome-free peptidyl-tRNAs (with 1 or more amino acids incorporated), which drop off the ribosome during protein synthesis, or as a result of ribosome stalling. Its function is as follows. Catalyzes the release of premature peptidyl moieties from peptidyl-tRNA molecules trapped in stalled 50S ribosomal subunits, and thus maintains levels of free tRNAs and 50S ribosomes. The polypeptide is Peptidyl-tRNA hydrolase (Lactobacillus acidophilus (strain ATCC 700396 / NCK56 / N2 / NCFM)).